Here is a 291-residue protein sequence, read N- to C-terminus: Bifunctional protein FolD (291 aa).

NADP(+) contacts are provided by residues 168–170, threonine 195, and valine 236; that span reads GRG.

Belongs to the tetrahydrofolate dehydrogenase/cyclohydrolase family. In terms of assembly, homodimer.

The catalysed reaction is (6R)-5,10-methylene-5,6,7,8-tetrahydrofolate + NADP(+) = (6R)-5,10-methenyltetrahydrofolate + NADPH. It catalyses the reaction (6R)-5,10-methenyltetrahydrofolate + H2O = (6R)-10-formyltetrahydrofolate + H(+). It participates in one-carbon metabolism; tetrahydrofolate interconversion. Catalyzes the oxidation of 5,10-methylenetetrahydrofolate to 5,10-methenyltetrahydrofolate and then the hydrolysis of 5,10-methenyltetrahydrofolate to 10-formyltetrahydrofolate. The chain is Bifunctional protein FolD from Bifidobacterium longum (strain DJO10A).